Consider the following 460-residue polypeptide: Muscarinic acetylcholine receptor M1 (460 aa).

Over 1-22 (MNTSAPPAVSPNITVLAPGKGP) the chain is Extracellular. 2 N-linked (GlcNAc...) asparagine glycosylation sites follow: Asn-2 and Asn-12. Residues 23–48 (WQVAFIGITTGLLSLATVTGNLLVLI) form a helical membrane-spanning segment. Residues 49 to 62 (SFKVNTELKTVNNY) lie on the Cytoplasmic side of the membrane. The chain crosses the membrane as a helical span at residues 63-84 (FLLSLACADLIIGTFSMNLYTT). At 85 to 95 (YLLMGHWALGT) the chain is on the extracellular side. Residues 96–121 (LACDLWLALDYVASNASVMNLLLISF) traverse the membrane as a helical segment. Cysteines 98 and 178 form a disulfide. Residues 122–142 (DRYFSVTRPLSYRAKRTPRRA) are Cytoplasmic-facing. The chain crosses the membrane as a helical span at residues 143–164 (ALMIGLAWLVSFVLWAPAILFW). The Extracellular portion of the chain corresponds to 165 to 185 (QYLVGERTVLAGQCYIQFLSQ). The chain crosses the membrane as a helical span at residues 186–209 (PIITFGTAMAAFYLPVTVMCTLYW). The Cytoplasmic portion of the chain corresponds to 210-366 (RIYRETESRA…LVKEKKAART (157 aa)). 3 disordered regions span residues 225–256 (LQGS…GTPP), 274–297 (WKEE…EEPG), and 310–351 (EAQA…QLAK). Thr-230 bears the Phosphothreonine mark. Positions 238-247 (SSSSERSQPG) are enriched in low complexity. The segment covering 328-343 (RPTKKGRDRAGKGQKP) has biased composition (basic residues). Residues 367 to 390 (LSAILLAFILTWTPYNIMVLVSTF) traverse the membrane as a helical segment. Topologically, residues 391-397 (CKDCVPE) are extracellular. Residues 398-420 (TLWELGYWLCYVNSTINPMCYAL) form a helical membrane-spanning segment. Residues 421-460 (CNKAFRDTFRLLLLCRWDKRRWRKIPKRPGSVHRTPSRQC) are Cytoplasmic-facing. Position 428 is a phosphothreonine (Thr-428). The residue at position 451 (Ser-451) is a Phosphoserine. Residue Thr-455 is modified to Phosphothreonine. Ser-457 carries the phosphoserine modification.

Belongs to the G-protein coupled receptor 1 family. Muscarinic acetylcholine receptor subfamily. CHRM1 sub-subfamily. As to quaternary structure, interacts with GPRASP2. Interacts with TMEM147.

It is found in the cell membrane. The protein resides in the postsynaptic cell membrane. Its function is as follows. The muscarinic acetylcholine receptor mediates various cellular responses, including inhibition of adenylate cyclase, breakdown of phosphoinositides and modulation of potassium channels through the action of G proteins. Primary transducing effect is Pi turnover. The protein is Muscarinic acetylcholine receptor M1 (CHRM1) of Pongo abelii (Sumatran orangutan).